The primary structure comprises 546 residues: Choline/ethanolamine transporter FLVCR2 (546 aa).

Residues 1 to 84 (MVNESLNQEE…TLAQPSGLTH (84 aa)) form a disordered region. The Cytoplasmic portion of the chain corresponds to 1–93 (MVNESLNQEE…HPNELVKEDS (93 aa)). Over residues 22–49 (QADTSYSTQPSVSIHPSVSGHPSVSIHP) the composition is skewed to polar residues. 7 repeat units span residues 31 to 36 (PSVSIH), 37 to 42 (PSVSGH), 43 to 48 (PSVSIH), 49 to 54 (PSVSGH), 55 to 60 (PSVSID), 61 to 66 (PSVSVH), and 67 to 72 (PSSSAH). The 9 X 6 AA tandem repeats of P-S-[VS]-S-[VIAG]-[HD] stretch occupies residues 31–84 (PSVSIHPSVSGHPSVSIHPSVSGHPSVSIDPSVSVHPSSSAHPSTLAQPSGLTH). Positions 54-74 (HPSVSIDPSVSVHPSSSAHPS) are enriched in low complexity. Residues 73–78 (PSTLAQ) form an 8; approximate repeat. A 9; approximate repeat occupies 79-84 (PSGLTH). The chain crosses the membrane as a helical span at residues 94–118 (VIKVSKRRWAVVLVFSCYSLCNAFQ). Choline contacts are provided by asparagine 115, alanine 116, and tryptophan 119. Residues 119–136 (WIQYGSINNIFMNFYGVS) lie on the Extracellular side of the membrane. Residues 137–164 (AFAIDWLSMCYMLTYIPLLLPVAWMLEK) form a helical membrane-spanning segment. Over 165–166 (FG) the chain is Cytoplasmic. A helical transmembrane segment spans residues 167 to 186 (LRTIAITGSALNCLGAWVKL). Topologically, residues 187–193 (GSLEPHL) are extracellular. A helical transmembrane segment spans residues 194–222 (FPVTMVGQVICSVAQVFILGMPSRIASVW). A choline-binding site is contributed by leucine 212. Over 223-227 (FGANE) the chain is Cytoplasmic. The helical transmembrane segment at 228-253 (VSTACSMAVFGNQLGIAIGFLVPPVL) threads the bilayer. Over 254–258 (VPNIK) the chain is Extracellular. Residues 259-288 (DQEKLAYHISIMFYIIGGVATLLFILVIIV) traverse the membrane as a helical segment. The Cytoplasmic portion of the chain corresponds to 289–324 (FKEKPKYPPSRAQSLSYALATTDASYLSSIVRLFKN). The helical transmembrane segment at 325–355 (LNFVLLVITYGLNAGAFYALSTLLNRMVIMH) threads the bilayer. Tyrosine 342 is a choline binding site. Over 356 to 359 (FPGQ) the chain is Extracellular. Residues 360–388 (EVNAGRIGLTIVIAGMFGAMISGIWLDKS) form a helical membrane-spanning segment. The Cytoplasmic portion of the chain corresponds to 389-390 (KT). The helical transmembrane segment at 391–413 (YKETTLVVYIMTLVGMVVYTFTL) threads the bilayer. The Extracellular segment spans residues 414–416 (NLN). The chain crosses the membrane as a helical span at residues 417-446 (HLWIVFITADSLGFFMTGYLPLGFEFAVEL). Over 447-454 (TYPESEGV) the chain is Cytoplasmic. The chain crosses the membrane as a helical span at residues 455–480 (SSGLLNVSAQVFGIIFTISQGQIIDN). Glutamine 464 serves as a coordination point for choline. Over 481–482 (YG) the chain is Extracellular. Residues 483 to 505 (SVPGNIFLCVFLALGSALTAFIK) form a helical membrane-spanning segment. Residues 506–546 (SDLRRQRANKDAPETKVQEEEEEEEESNTSKVPTVLSEAHL) are Cytoplasmic-facing. Residues 511–523 (QRANKDAPETKVQ) are compositionally biased toward basic and acidic residues. Residues 511–546 (QRANKDAPETKVQEEEEEEEESNTSKVPTVLSEAHL) are disordered. The residue at position 535 (serine 535) is a Phosphoserine.

This sequence belongs to the major facilitator superfamily. Feline leukemia virus subgroup C receptor (TC 2.A.1.28.1) family. In terms of assembly, interacts with components of electron transfer chain complexes III, IV and V including CYC1, NDUFA4, COX4I1, ATP5PD and ATP5F1C; these interactions occur in the absence of heme and are disrupted upon heme binding. Interacts with ATP2A2; this interaction occurs in the absence of heme and promotes ATP2A2 proteasomal degradation; the complex is dissociated upon heme binding. Interacts with HMOX1; this interaction is potentiated in the presence of heme.

Its subcellular location is the cell membrane. It localises to the mitochondrion membrane. It is found in the endoplasmic reticulum membrane. It catalyses the reaction choline(out) = choline(in). The catalysed reaction is ethanolamine(in) = ethanolamine(out). It carries out the reaction heme b(in) = heme b(out). In terms of biological role, choline uniporter that specifically mediates choline uptake at the blood-brain-barrier. Responsible for the majority of choline uptake across the blood-brain-barrier from the circulation into the brain. Choline, a nutrient critical for brain development, is a precursor of phosphatidylcholine, as well as betaine. Also mediates transport of ethanolamine. Choline and ethanolamine transport is not coupled with proton transport and is exclusively driven by the choline gradient across the plasma membrane. However, the presence of an inwardly directed proton gradient enhances choline uptake. Also acts as a heme b transporter. Required to regulate mitochondrial respiration processes, ATP synthesis and thermogenesis. At low heme levels, interacts with components of electron transfer chain (ETC) complexes and ATP2A2, leading to ubiquitin-mediated degradation of ATP2A2 and inhibition of thermogenesis. Upon heme binding, dissociates from ETC complexes to allow switching from mitochondrial ATP synthesis to thermogenesis. The polypeptide is Choline/ethanolamine transporter FLVCR2 (Flvcr2) (Rattus norvegicus (Rat)).